The sequence spans 67 residues: DNA-directed RNA polymerase subunit Rpo10 (67 aa).

Residues C7, C10, C44, and C45 each coordinate Zn(2+).

It belongs to the archaeal Rpo10/eukaryotic RPB10 RNA polymerase subunit family. In terms of assembly, part of the RNA polymerase complex. Zn(2+) is required as a cofactor.

The protein resides in the cytoplasm. It carries out the reaction RNA(n) + a ribonucleoside 5'-triphosphate = RNA(n+1) + diphosphate. In terms of biological role, DNA-dependent RNA polymerase (RNAP) catalyzes the transcription of DNA into RNA using the four ribonucleoside triphosphates as substrates. The sequence is that of DNA-directed RNA polymerase subunit Rpo10 from Caldivirga maquilingensis (strain ATCC 700844 / DSM 13496 / JCM 10307 / IC-167).